The chain runs to 280 residues: 2-dehydro-3-deoxyphosphooctonate aldolase (280 aa).

Belongs to the KdsA family.

The protein resides in the cytoplasm. The enzyme catalyses D-arabinose 5-phosphate + phosphoenolpyruvate + H2O = 3-deoxy-alpha-D-manno-2-octulosonate-8-phosphate + phosphate. The protein operates within carbohydrate biosynthesis; 3-deoxy-D-manno-octulosonate biosynthesis; 3-deoxy-D-manno-octulosonate from D-ribulose 5-phosphate: step 2/3. It functions in the pathway bacterial outer membrane biogenesis; lipopolysaccharide biosynthesis. In Thioalkalivibrio sulfidiphilus (strain HL-EbGR7), this protein is 2-dehydro-3-deoxyphosphooctonate aldolase.